The sequence spans 342 residues: UDP-N-acetylglucosamine--N-acetylmuramyl-(pentapeptide) pyrophosphoryl-undecaprenol N-acetylglucosamine transferase (342 aa).

UDP-N-acetyl-alpha-D-glucosamine-binding positions include 10-12 (TGG), Asn124, Ser177, and Gln275.

This sequence belongs to the glycosyltransferase 28 family. MurG subfamily.

It is found in the cell inner membrane. It carries out the reaction di-trans,octa-cis-undecaprenyl diphospho-N-acetyl-alpha-D-muramoyl-L-alanyl-D-glutamyl-meso-2,6-diaminopimeloyl-D-alanyl-D-alanine + UDP-N-acetyl-alpha-D-glucosamine = di-trans,octa-cis-undecaprenyl diphospho-[N-acetyl-alpha-D-glucosaminyl-(1-&gt;4)]-N-acetyl-alpha-D-muramoyl-L-alanyl-D-glutamyl-meso-2,6-diaminopimeloyl-D-alanyl-D-alanine + UDP + H(+). The protein operates within cell wall biogenesis; peptidoglycan biosynthesis. Functionally, cell wall formation. Catalyzes the transfer of a GlcNAc subunit on undecaprenyl-pyrophosphoryl-MurNAc-pentapeptide (lipid intermediate I) to form undecaprenyl-pyrophosphoryl-MurNAc-(pentapeptide)GlcNAc (lipid intermediate II). In Campylobacter jejuni subsp. jejuni serotype O:2 (strain ATCC 700819 / NCTC 11168), this protein is UDP-N-acetylglucosamine--N-acetylmuramyl-(pentapeptide) pyrophosphoryl-undecaprenol N-acetylglucosamine transferase.